Here is a 100-residue protein sequence, read N- to C-terminus: Urease subunit gamma (100 aa).

The protein belongs to the urease gamma subunit family. As to quaternary structure, heterotrimer of UreA (gamma), UreB (beta) and UreC (alpha) subunits. Three heterotrimers associate to form the active enzyme.

It is found in the cytoplasm. It carries out the reaction urea + 2 H2O + H(+) = hydrogencarbonate + 2 NH4(+). It functions in the pathway nitrogen metabolism; urea degradation; CO(2) and NH(3) from urea (urease route): step 1/1. In Prochlorococcus marinus (strain MIT 9313), this protein is Urease subunit gamma.